The primary structure comprises 348 residues: Heat-inducible transcription repressor HrcA (348 aa).

This sequence belongs to the HrcA family.

Its function is as follows. Negative regulator of class I heat shock genes (grpE-dnaK-dnaJ and groELS operons). Prevents heat-shock induction of these operons. The chain is Heat-inducible transcription repressor HrcA from Pelotomaculum thermopropionicum (strain DSM 13744 / JCM 10971 / SI).